Reading from the N-terminus, the 122-residue chain is uncharacterized protein (122 aa).

This is an uncharacterized protein from Methanothermobacter thermautotrophicus (Methanobacterium thermoformicicum).